Here is a 524-residue protein sequence, read N- to C-terminus: tRNA-2-methylthio-N(6)-dimethylallyladenosine synthase (524 aa).

Over residues 1-12 (MNTHPSHPDHPA) the composition is skewed to basic and acidic residues. The disordered stretch occupies residues 1–23 (MNTHPSHPDHPADTLPARGNREG). Residues 27-143 (RTYEVRTFGC…LPTLLNRAEH (117 aa)) enclose the MTTase N-terminal domain. [4Fe-4S] cluster contacts are provided by Cys-36, Cys-72, Cys-106, Cys-180, Cys-184, and Cys-187. The Radical SAM core domain occupies 166 to 402 (RESAYAGWVS…MALQERICEE (237 aa)). The region spanning 405 to 476 (QKFIGQTVEL…PFFLIADAGV (72 aa)) is the TRAM domain.

Belongs to the methylthiotransferase family. MiaB subfamily. Monomer. The cofactor is [4Fe-4S] cluster.

The protein localises to the cytoplasm. The enzyme catalyses N(6)-dimethylallyladenosine(37) in tRNA + (sulfur carrier)-SH + AH2 + 2 S-adenosyl-L-methionine = 2-methylsulfanyl-N(6)-dimethylallyladenosine(37) in tRNA + (sulfur carrier)-H + 5'-deoxyadenosine + L-methionine + A + S-adenosyl-L-homocysteine + 2 H(+). Catalyzes the methylthiolation of N6-(dimethylallyl)adenosine (i(6)A), leading to the formation of 2-methylthio-N6-(dimethylallyl)adenosine (ms(2)i(6)A) at position 37 in tRNAs that read codons beginning with uridine. This is tRNA-2-methylthio-N(6)-dimethylallyladenosine synthase from Corynebacterium efficiens (strain DSM 44549 / YS-314 / AJ 12310 / JCM 11189 / NBRC 100395).